Here is a 275-residue protein sequence, read N- to C-terminus: NAD kinase (275 aa).

The active-site Proton acceptor is Asp-68. NAD(+)-binding positions include 68-69, Arg-73, 136-137, Lys-147, Arg-164, Asp-166, 177-182, Ala-201, and Gln-236; these read DG, NE, and TAYAMS.

The protein belongs to the NAD kinase family. Requires a divalent metal cation as cofactor.

It localises to the cytoplasm. It carries out the reaction NAD(+) + ATP = ADP + NADP(+) + H(+). In terms of biological role, involved in the regulation of the intracellular balance of NAD and NADP, and is a key enzyme in the biosynthesis of NADP. Catalyzes specifically the phosphorylation on 2'-hydroxyl of the adenosine moiety of NAD to yield NADP. The sequence is that of NAD kinase from Methanosarcina acetivorans (strain ATCC 35395 / DSM 2834 / JCM 12185 / C2A).